A 98-amino-acid chain; its full sequence is SFAGILDDADITAALAACKAEGSFKHVEFFAKIGLAGKKVFAIIDQDKSDFVEEDELKLFLQVFSAGARALTDAETKAGDSDGDGKIGVDEFAQMIKG.

S1 carries the N-acetylserine modification. 2 consecutive EF-hand domains span residues 32 to 67 (KIGLAGKKVFAIIDQDKSDFVEEDELKLFLQVFSAG) and 67 to 98 (GARALTDAETKAGDSDGDGKIGVDEFAQMIKG). D45, D47, S49, F51, E53, E56, D80, D82, D84, K86, and E91 together coordinate Ca(2+).

Belongs to the parvalbumin family.

Functionally, in muscle, parvalbumin is thought to be involved in relaxation after contraction. It binds two calcium ions. This is Parvalbumin beta 1 from Macruronus magellanicus (Patagonian grenadier).